We begin with the raw amino-acid sequence, 393 residues long: Bifunctional chrysanthemol synthase, chloroplastic (393 aa).

The span at 1-18 (MACSSSLSSKWASWGASS) shows a compositional bias: low complexity. The disordered stretch occupies residues 1–22 (MACSSSLSSKWASWGASSRPHP). The N-terminal 53 residues, 1–53 (MACSSSLSSKWASWGASSRPHPSVQPFVTRKNVVRYHKPTSELSYSPLTTTLS), are a transit peptide targeting the chloroplast. Dimethylallyl diphosphate-binding residues include Lys-99, Arg-102, and Gln-137. Mg(2+)-binding residues include Asp-144 and Asp-148. Dimethylallyl diphosphate is bound by residues Arg-153, Arg-154, Lys-241, Gln-280, Asp-287, Lys-297, and Lys-306.

The protein belongs to the FPP/GGPP synthase family. Mg(2+) is required as a cofactor. Restricted to glandular trichomes during achene maturation. Expressed in flowers and in both ray and disk florets.

It is found in the plastid. The protein resides in the chloroplast. The catalysed reaction is 2 dimethylallyl diphosphate = (R,R)-chrysanthemyl diphosphate + diphosphate. The enzyme catalyses (R,R)-chrysanthemyl diphosphate + H2O = (R,R)-chrysanthemol + diphosphate. It carries out the reaction (R)-lavandulyl diphosphate + H2O = (R)-lavandulol + diphosphate. It functions in the pathway isoprenoid biosynthesis. Component of the monoterpenoid pyrethrins biosynthesis; pyrethrins are widely used plant-derived pesticide. Catalyzes the condensation of two molecules of dimethylallyl diphosphate to produce chrysanthemyl diphosphate (CPP), a monoterpene with a non-head-to-tail or irregular c1'-2-3 linkage between isoprenoid units. In a second step, hydrolyzes the diphosphate moiety of CPP to form chrysanthemol. With a lower efficiency, can also converts dimethylallyl diphosphate into lavandulyl diphosphate (LPP), and subsequently LPP into lavandulol. The sequence is that of Bifunctional chrysanthemol synthase, chloroplastic from Tanacetum cinerariifolium (Dalmatian daisy).